We begin with the raw amino-acid sequence, 426 residues long: Protein sum2 (426 aa).

Residues 1-80 (MTEFIGSRIS…VKDLRIEEPA (80 aa)) enclose the Sm domain. Disordered stretches follow at residues 79-100 (PATTPSAPPVQPPNDPAIIGSN), 204-305 (GMPS…AKPR), and 348-426 (SCES…ANDQ). Pro residues predominate over residues 84 to 93 (SAPPVQPPND). Residues 226–237 (VSASPSLQSMPP) are compositionally biased toward polar residues. Residues 261-278 (RNSTVTNDRVVNTTVDVS) show a composition bias toward low complexity. Polar residues predominate over residues 279 to 298 (QSQTVETSGPSKEVPTTQPD). The region spanning 296 to 332 (QPDASAAKPRTEFDFQTANQKFQSMKDDLLKGKNDEE) is the DFDF domain. Residues 335–351 (EFYKPKQSFFDNISCES) carry the FFD box motif. Residues 350–371 (ESKEKGMEAADRRALRDRERSL) are compositionally biased toward basic and acidic residues. The TFG box signature appears at 360–380 (DRRALRDRERSLNMETFGVAG). A compositionally biased stretch (basic residues) spans 384-401 (RGRRGRGRGRGGRGRGRG). The segment covering 405–426 (NQYNQYRNSNGSQPRAQPANDQ) has biased composition (polar residues).

In terms of biological role, required for G2/M phase checkpoint control. This is Protein sum2 (sum2) from Schizosaccharomyces pombe (strain 972 / ATCC 24843) (Fission yeast).